A 229-amino-acid chain; its full sequence is Claudin-25 (229 aa).

Over 1-10 the chain is Cytoplasmic; it reads MAWSFRAKVQ. The chain crosses the membrane as a helical span at residues 11-31; sequence LGGLLLSLLGWVCSCVTTILP. Residues 32-81 lie on the Extracellular side of the membrane; sequence QWKTLNLELNEMETWIMGIWEVCVDREEVATVCKAFESFLSLPQELQVAR. The chain crosses the membrane as a helical span at residues 82-102; that stretch reads ILMVASHGLGLLGLLLCSFGS. The Cytoplasmic portion of the chain corresponds to 103–124; sequence ECFQFHRIRWVFKRRLGLLGRT. The helical transmembrane segment at 125-145 threads the bilayer; sequence LEASASATTLLPVSWVAHATI. Residues 146–164 lie on the Extracellular side of the membrane; the sequence is QDFWDDSIPDIIPRWEFGG. The helical transmembrane segment at 165 to 185 threads the bilayer; it reads ALYLGWAAGIFLALGGLLLIF. The Cytoplasmic segment spans residues 186 to 229; it reads SACLGKEDVPFPLMAGPTVPLSCAPVEESDGSFHLMLRPRNLVI.

Belongs to the claudin family.

The protein resides in the cell junction. Its subcellular location is the tight junction. The protein localises to the cell membrane. Functionally, plays a major role in tight junction-specific obliteration of the intercellular space, through calcium-independent cell-adhesion activity. This Homo sapiens (Human) protein is Claudin-25 (CLDN25).